Consider the following 1745-residue polypeptide: Tight junction protein 1 (1745 aa).

The PDZ 1 domain occupies 23-110 (TVTLHRAPGF…NAKITIRRKK (88 aa)). Basic residues predominate over residues 102–112 (AKITIRRKKKV). The segment at 102–189 (AKITIRRKKK…QPAKPTKVTL (88 aa)) is disordered. Residues 123 to 136 (PVSDNEDDSYDEEV) show a composition bias toward acidic residues. S125 carries the phosphoserine modification. The residue at position 132 (Y132) is a Phosphotyrosine. The span at 149 to 175 (RRSEKSWARDRSASRERSLSPRSDRRS) shows a compositional bias: basic and acidic residues. 3 positions are modified to phosphoserine: S175, S178, and S179. T185 is modified (phosphothreonine). The PDZ 2 domain occupies 186–264 (KVTLVKSRKN…KLKMVVQRDE (79 aa)). S212 and S241 each carry phosphoserine. T267 is modified (phosphothreonine). 13 positions are modified to phosphoserine: S275, S277, S280, S284, S290, S294, S297, S300, S323, S329, S334, S337, and S353. The disordered stretch occupies residues 296-364 (ASDHSGRSHD…PVKHVDDHPP (69 aa)). Over residues 299-308 (HSGRSHDRPP) the composition is skewed to basic and acidic residues. Over residues 325–338 (HSTQSPQQPSNGSL) the composition is skewed to polar residues. The residue at position 354 (T354) is a Phosphothreonine. One can recognise a PDZ 3 domain in the interval 421-502 (SMKLVKFRKG…GEEVTILAQK (82 aa)). Positions 516 to 584 (GDSFYIRTHF…PNKNRAEQLA (69 aa)) constitute an SH3 domain. A Guanylate kinase-like domain is found at 610–791 (SKRNLRKSRE…WYGALKEAIQ (182 aa)). S617 and S622 each carry phosphoserine. The occludin (OCLN)-binding region stretch occupies residues 633–876 (YERVVLREAG…GTPPESAITR (244 aa)). T809 is subject to Phosphothreonine. A phosphoserine mark is found at S810 and S821. Phosphotyrosine is present on Y822. S824, S828, and S837 each carry phosphoserine. Disordered regions lie at residues 825-944 (APGS…SASA) and 956-1042 (LEEP…YEPQ). T846, T848, T854, T861, and T868 each carry phosphothreonine. Positions 879–892 (EPVREDSSGMHHEN) are enriched in basic and acidic residues. The span at 893 to 906 (QTYPPYSPQAQPQA) shows a compositional bias: low complexity. Position 912 is a phosphoserine (S912). Over residues 998–1014 (DPAKVYRKEPYSEEMMR) the composition is skewed to basic and acidic residues. S1071 bears the Phosphoserine mark. The interval 1090–1586 (QWSYYDDKQP…STQPPEFDSG (497 aa)) is disordered. The span at 1106-1124 (ENQHPRDLDSRQHPEEASE) shows a compositional bias: basic and acidic residues. The residue at position 1138 (S1138) is a Phosphoserine. A phosphotyrosine mark is found at Y1139 and Y1164. The actin-binding region (ABR) stretch occupies residues 1150 to 1370 (RTSTLRHEEQ…FDRRSFESKP (221 aa)). 2 stretches are compositionally biased toward basic and acidic residues: residues 1268 to 1285 (KMFENKRSASLENKKDVN) and 1335 to 1346 (PPEDIVRSNHYD). A Phosphotyrosine modification is found at Y1353. At S1365 the chain carries Phosphoserine. Over residues 1388–1399 (SQSQPNFSSYSS) the composition is skewed to low complexity. Over residues 1401 to 1418 (GKPETDAVDRSFSEKRYD) the composition is skewed to basic and acidic residues. Phosphoserine is present on S1411. Low complexity predominate over residues 1431–1445 (SQYSQPAPPLSSSSL). Polar residues-rich tracts occupy residues 1455-1468 (EGNSVSLDFQNSYM) and 1510-1519 (AEQTQKTITP). Residues 1535-1544 (PFERKFESPK) are compositionally biased toward basic and acidic residues. At S1542 the chain carries Phosphoserine. Over residues 1561-1580 (SSKTPTSPKTLMKAHSSTQP) the composition is skewed to polar residues. The residue at position 1614 (S1614) is a Phosphoserine. Positions 1631–1745 (ATARGIFNSN…NCVSVLIDHF (115 aa)) constitute a ZU5 domain.

The protein belongs to the MAGUK family. As to quaternary structure, homodimer. Forms heterodimers TJP3. Forms a heterodimer (via PDZ2 domain) with TJP2/ZO2 (via PDZ2 domain). Interacts with OCLN, CALM, claudins, CGN/cingulin, CXADR, GJD3 and UBN1. Interacts (via ZU5 domain) with CDC42BPB. Interacts (via PDZ domain) with GJA1. Interacts (via PDZ domains) with ANKRD2. Interacts with POPDC1 (via the C-terminus cytoplasmic tail). Interacts with GJA12 and KIRREL1. Interacts with HSPA4. Interacts (via ZU5 domain) with MYZAP. Interacts with DLL1. Interacts with USP53 (via the C-terminal region). Interacts with DNMBP (via C-terminal domain); required for the apical cell-cell junction localization of DNMBP. Interacts with SPEF1. Interacts (via N-terminus) with CTNNA1. Interacts with CLDN18. Interacts with CLDN16 (via TRV motif); this is a prerequisite for anchoring of CLDN16 at the tight junction. Interacts with PKP1; the interaction facilitates TJP1/ZO-1 localization to the plasma membrane. Interacts with PATJ (via PDZ1-6 domains); the interaction is required for attachment and extension of TJP1/ZO1 condensates along the apical cell interface. Phosphorylated at tyrosine redidues in response to epidermal growth factor (EGF). This response is dependent on an intact actin microfilament system. Dephosphorylated by PTPRJ. As to expression, expressed between ameloblasts, at ameloblast-ameloblast junctions and in the stratum intermedium during pre-secretory and secretory stages of tooth development (at protein level).

Its subcellular location is the cell membrane. It localises to the cell junction. The protein localises to the tight junction. It is found in the gap junction. The protein resides in the cytoplasm. Its subcellular location is the myofibril. It localises to the sarcomere. The protein localises to the i band. Functionally, tjp1, TjpP2, and Tjp3 are closely related scaffolding proteins that link tight junction (TJ) transmembrane proteins such as claudins, junctional adhesion molecules, and occludin to the actin cytoskeleton. Forms a multistranded TJP1/ZO1 condensate which elongates to form a tight junction belt, the belt is anchored at the apical cell membrane via interaction with PATJ. The tight junction acts to limit movement of substances through the paracellular space and as a boundary between the compositionally distinct apical and basolateral plasma membrane domains of epithelial and endothelial cells. Necessary for lumenogenesis, and particularly efficient epithelial polarization and barrier formation. Plays a role in the regulation of cell migration by targeting Cdc42bpb to the leading edge of migrating cells. Plays an important role in podosome formation and associated function, thus regulating cell adhesion and matrix remodeling. With Tjp2 and TJjp3, participates in the junctional retention and stability of the transcription factor Dbpa, but is not involved in its shuttling to the nucleus. May play a role in mediating cell morphology changes during ameloblast differentiation via its role in tight junctions. This is Tight junction protein 1 from Mus musculus (Mouse).